Reading from the N-terminus, the 178-residue chain is ATP-dependent protease subunit HslV (178 aa).

The active site involves Thr7. The Na(+) site is built by Gly162, Cys165, and Thr168.

It belongs to the peptidase T1B family. HslV subfamily. A double ring-shaped homohexamer of HslV is capped on each side by a ring-shaped HslU homohexamer. The assembly of the HslU/HslV complex is dependent on binding of ATP.

Its subcellular location is the cytoplasm. It carries out the reaction ATP-dependent cleavage of peptide bonds with broad specificity.. With respect to regulation, allosterically activated by HslU binding. Protease subunit of a proteasome-like degradation complex believed to be a general protein degrading machinery. In Burkholderia mallei (strain ATCC 23344), this protein is ATP-dependent protease subunit HslV.